Reading from the N-terminus, the 329-residue chain is GTP 3',8-cyclase (329 aa).

The region spanning Met-1–Ala-229 is the Radical SAM core domain. Arg-8 is a binding site for GTP. [4Fe-4S] cluster contacts are provided by Cys-15 and Cys-19. Tyr-21 is a binding site for S-adenosyl-L-methionine. Cys-22 lines the [4Fe-4S] cluster pocket. Position 60 (Arg-60) interacts with GTP. Residue Gly-64 participates in S-adenosyl-L-methionine binding. Thr-91 lines the GTP pocket. Position 115 (Ser-115) interacts with S-adenosyl-L-methionine. Lys-155 provides a ligand contact to GTP. Met-189 provides a ligand contact to S-adenosyl-L-methionine. Positions 252 and 255 each coordinate [4Fe-4S] cluster. Arg-257–Arg-259 is a GTP binding site. Position 269 (Cys-269) interacts with [4Fe-4S] cluster.

It belongs to the radical SAM superfamily. MoaA family. As to quaternary structure, monomer and homodimer. Requires [4Fe-4S] cluster as cofactor.

It carries out the reaction GTP + AH2 + S-adenosyl-L-methionine = (8S)-3',8-cyclo-7,8-dihydroguanosine 5'-triphosphate + 5'-deoxyadenosine + L-methionine + A + H(+). It functions in the pathway cofactor biosynthesis; molybdopterin biosynthesis. Functionally, catalyzes the cyclization of GTP to (8S)-3',8-cyclo-7,8-dihydroguanosine 5'-triphosphate. In Picosynechococcus sp. (strain ATCC 27264 / PCC 7002 / PR-6) (Agmenellum quadruplicatum), this protein is GTP 3',8-cyclase.